We begin with the raw amino-acid sequence, 206 residues long: LexA repressor (206 aa).

Positions 28-48 (VREIGEAVGLASSSTVHGHLA) form a DNA-binding region, H-T-H motif. Catalysis depends on for autocatalytic cleavage activity residues Ser-128 and Lys-166.

The protein belongs to the peptidase S24 family. In terms of assembly, homodimer.

The enzyme catalyses Hydrolysis of Ala-|-Gly bond in repressor LexA.. Functionally, represses a number of genes involved in the response to DNA damage (SOS response), including recA and lexA. In the presence of single-stranded DNA, RecA interacts with LexA causing an autocatalytic cleavage which disrupts the DNA-binding part of LexA, leading to derepression of the SOS regulon and eventually DNA repair. This chain is LexA repressor, found in Bacillus velezensis (strain DSM 23117 / BGSC 10A6 / LMG 26770 / FZB42) (Bacillus amyloliquefaciens subsp. plantarum).